The chain runs to 160 residues: Lipoprotein signal peptidase (160 aa).

Transmembrane regions (helical) follow at residues 13-33 (IYIT…RLII), 72-92 (WFLS…ITKL), and 104-124 (SLII…GFVV). Catalysis depends on residues Asp125 and Asp143. The helical transmembrane segment at 134–154 (WHFATFNIADCSIFIGIIILM) threads the bilayer.

It belongs to the peptidase A8 family.

The protein localises to the cell inner membrane. The enzyme catalyses Release of signal peptides from bacterial membrane prolipoproteins. Hydrolyzes -Xaa-Yaa-Zaa-|-(S,diacylglyceryl)Cys-, in which Xaa is hydrophobic (preferably Leu), and Yaa (Ala or Ser) and Zaa (Gly or Ala) have small, neutral side chains.. It participates in protein modification; lipoprotein biosynthesis (signal peptide cleavage). Functionally, this protein specifically catalyzes the removal of signal peptides from prolipoproteins. This is Lipoprotein signal peptidase from Buchnera aphidicola subsp. Acyrthosiphon pisum (strain APS) (Acyrthosiphon pisum symbiotic bacterium).